Reading from the N-terminus, the 167-residue chain is Putative universal stress protein SSP1056 (167 aa).

This sequence belongs to the universal stress protein A family.

The protein localises to the cytoplasm. In Staphylococcus saprophyticus subsp. saprophyticus (strain ATCC 15305 / DSM 20229 / NCIMB 8711 / NCTC 7292 / S-41), this protein is Putative universal stress protein SSP1056.